A 305-amino-acid polypeptide reads, in one-letter code: tRNA dimethylallyltransferase (305 aa).

Residue 11–18 participates in ATP binding; the sequence is GPTAVGKT. 13–18 serves as a coordination point for substrate; the sequence is TAVGKT. The interval 36–39 is interaction with substrate tRNA; sequence DSMQ.

The protein belongs to the IPP transferase family. Monomer. Mg(2+) is required as a cofactor.

It carries out the reaction adenosine(37) in tRNA + dimethylallyl diphosphate = N(6)-dimethylallyladenosine(37) in tRNA + diphosphate. In terms of biological role, catalyzes the transfer of a dimethylallyl group onto the adenine at position 37 in tRNAs that read codons beginning with uridine, leading to the formation of N6-(dimethylallyl)adenosine (i(6)A). The chain is tRNA dimethylallyltransferase from Listeria monocytogenes serotype 4a (strain HCC23).